The following is a 569-amino-acid chain: MAATKWRDIDDLPKIPANYTALTPLWFLDRAAVVHPTRKSVIHGSREYTWRQTYDRCRRLASALADRSIGPGSTVAIIAPNIPAMYEAHFGVPMCGAVLNCVNIRLNAPTVAFLLSHSQSSVIMVDQEFFTLAEDSLRLMEEKAGSSFKRPLLIVIGDHTCAPESLNRALSKGAIEYEDFLATGDPNYPWQPPADEWQSIALGYTSGTTASPKGVVLHHRGAYIMALSNPLIWGMQDGAVYLWTLPMFHCNGWCFPWSLAVLSGTSICLRQVTAKEVYSMIAKYKVTHFCAAPVVLNAIVNAPKEDTILPLPHTVHVMTAGAAPPPSVLFSMNQKGFRVAHTYGLSETYGPSTVCAWKPEWDSLPPETQAKLNARQGVRYTGMEQLDVIDTQTGKPVPADGKTAGEIVFRGNMVMKGYLKNPEANKETFAGGWFHSGDIAVKHPDNYIEIKDRSKDVIISGGENISSVEVENVVYHHPAVLEASVVARPDERWQESPCAFVTLKSDYEKHDQNKLAQDIMKFCREKLPAYWVPKSVVFGPLPKTATGKIQKHILRTKAKEMGPVPRSRL.

A Microbody targeting signal motif is present at residues 567 to 569 (SRL).

Belongs to the ATP-dependent AMP-binding enzyme family. Expressed in roots, leaves, stems, flowers and developing seeds.

It is found in the peroxisome. The enzyme catalyses acetate + ATP + CoA = acetyl-CoA + AMP + diphosphate. It carries out the reaction a medium-chain fatty acid + ATP + CoA = a medium-chain fatty acyl-CoA + AMP + diphosphate. Its function is as follows. Peroxisomal acetate/butyrate--CoA ligase that is probably involved in the activation of exogenous acetate for entry into the glyoxylate cycle. May play a role to prevent carbon loss from peroxisomes during lipid mobilization. In vitro, is active with both acetate and butyrate. This Arabidopsis thaliana (Mouse-ear cress) protein is Acetate/butyrate--CoA ligase AAE7, peroxisomal (AAE7).